The sequence spans 36 residues: Photosystem I reaction center subunit VIII (36 aa).

Residues 7 to 29 (PSIFVPLVGLVFPAITMASLFIY) form a helical membrane-spanning segment.

This sequence belongs to the PsaI family.

Its subcellular location is the plastid. The protein resides in the chloroplast thylakoid membrane. Its function is as follows. May help in the organization of the PsaL subunit. The chain is Photosystem I reaction center subunit VIII from Psilotum nudum (Whisk fern).